The chain runs to 171 residues: MRAIFLILCSVLLNGCLGMPESVKPVSDFELNNYLGKWYEVARLDHSFERGLSQVTAEYRVRNDGGISVLNRGYSEEKGEWKEAEGKAYFVNGSTDGYLKVSFFGPFYGSYVVFELDRENYSYAFVSGPNTEYLWLLSRTPTVERGILDKFIEMSKERGFDTNRLIYVQQQ.

An N-terminal signal peptide occupies residues 1-15 (MRAIFLILCSVLLNG). The N-palmitoyl cysteine moiety is linked to residue Cys16. Cys16 is lipidated: S-diacylglycerol cysteine.

It belongs to the calycin superfamily. Lipocalin family. As to quaternary structure, homodimer.

Its subcellular location is the cell outer membrane. Its function is as follows. Involved in the storage or transport of lipids necessary for membrane maintenance under stressful conditions. Displays a binding preference for lysophospholipids. This is Outer membrane lipoprotein Blc (blc) from Vibrio cholerae serotype O1 (strain ATCC 39315 / El Tor Inaba N16961).